Reading from the N-terminus, the 133-residue chain is Ribonuclease P protein component (133 aa).

Positions 114-133 (RSRPTPEEKSEPAGVDSTDA) are disordered.

The protein belongs to the RnpA family. In terms of assembly, consists of a catalytic RNA component (M1 or rnpB) and a protein subunit.

It carries out the reaction Endonucleolytic cleavage of RNA, removing 5'-extranucleotides from tRNA precursor.. Functionally, RNaseP catalyzes the removal of the 5'-leader sequence from pre-tRNA to produce the mature 5'-terminus. It can also cleave other RNA substrates such as 4.5S RNA. The protein component plays an auxiliary but essential role in vivo by binding to the 5'-leader sequence and broadening the substrate specificity of the ribozyme. This is Ribonuclease P protein component from Pseudomonas syringae pv. tomato (strain ATCC BAA-871 / DC3000).